Consider the following 920-residue polypeptide: Valine--tRNA ligase (920 aa).

A 'HIGH' region motif is present at residues 40–50 (PNVTGTLHMGH). A 'KMSKS' region motif is present at residues 522–526 (KMSKS). Residue K525 coordinates ATP. Coiled-coil stretches lie at residues 642–668 (EWIRTRLQQTIKNAEEALSQYRFDLLA) and 849–920 (AGVI…IESL).

The protein belongs to the class-I aminoacyl-tRNA synthetase family. ValS type 1 subfamily. As to quaternary structure, monomer.

The protein resides in the cytoplasm. The enzyme catalyses tRNA(Val) + L-valine + ATP = L-valyl-tRNA(Val) + AMP + diphosphate. Its function is as follows. Catalyzes the attachment of valine to tRNA(Val). As ValRS can inadvertently accommodate and process structurally similar amino acids such as threonine, to avoid such errors, it has a 'posttransfer' editing activity that hydrolyzes mischarged Thr-tRNA(Val) in a tRNA-dependent manner. This is Valine--tRNA ligase from Coxiella burnetii (strain RSA 493 / Nine Mile phase I).